Reading from the N-terminus, the 338-residue chain is S-adenosylmethionine:tRNA ribosyltransferase-isomerase (338 aa).

It belongs to the QueA family. Monomer.

Its subcellular location is the cytoplasm. The enzyme catalyses 7-aminomethyl-7-carbaguanosine(34) in tRNA + S-adenosyl-L-methionine = epoxyqueuosine(34) in tRNA + adenine + L-methionine + 2 H(+). It functions in the pathway tRNA modification; tRNA-queuosine biosynthesis. In terms of biological role, transfers and isomerizes the ribose moiety from AdoMet to the 7-aminomethyl group of 7-deazaguanine (preQ1-tRNA) to give epoxyqueuosine (oQ-tRNA). The chain is S-adenosylmethionine:tRNA ribosyltransferase-isomerase from Francisella tularensis subsp. novicida (strain U112).